A 100-amino-acid polypeptide reads, in one-letter code: Integration host factor subunit alpha (100 aa).

Residues 53–72 (FQLRDKPQRPGRNPKTGEEV) are disordered.

The protein belongs to the bacterial histone-like protein family. As to quaternary structure, heterodimer of an alpha and a beta chain.

This protein is one of the two subunits of integration host factor, a specific DNA-binding protein that functions in genetic recombination as well as in transcriptional and translational control. This Neisseria gonorrhoeae (strain ATCC 700825 / FA 1090) protein is Integration host factor subunit alpha.